Reading from the N-terminus, the 139-residue chain is Acidic phospholipase A2 S1E6-c (139 aa).

Positions 1-16 are cleaved as a signal peptide; that stretch reads MRTLWILAVLLVGVEG. 7 disulfide bridges follow: Cys-42–Cys-132, Cys-44–Cys-60, Cys-59–Cys-111, Cys-65–Cys-139, Cys-66–Cys-104, Cys-73–Cys-97, and Cys-91–Cys-102. Tyr-43, Gly-45, and Gly-47 together coordinate Ca(2+). Residue His-63 is part of the active site. Residue Asp-64 participates in Ca(2+) binding. Asp-105 is an active-site residue.

This sequence belongs to the phospholipase A2 family. Group II subfamily. D49 sub-subfamily. Homodimer. Ca(2+) serves as cofactor. In terms of tissue distribution, expressed by the venom gland.

It localises to the secreted. The catalysed reaction is a 1,2-diacyl-sn-glycero-3-phosphocholine + H2O = a 1-acyl-sn-glycero-3-phosphocholine + a fatty acid + H(+). Its function is as follows. Snake venom phospholipase A2 (PLA2) that inhibits ADP-induced platelet aggregation. PLA2 catalyzes the calcium-dependent hydrolysis of the 2-acyl groups in 3-sn-phosphoglycerides. In Calloselasma rhodostoma (Malayan pit viper), this protein is Acidic phospholipase A2 S1E6-c.